The chain runs to 497 residues: Glycerol kinase (497 aa).

Thr-11 is a binding site for ADP. Residues Thr-11, Ser-12, and Ser-13 each contribute to the ATP site. Thr-11 is a binding site for sn-glycerol 3-phosphate. Arg-15 serves as a coordination point for ADP. The sn-glycerol 3-phosphate site is built by Arg-81, Glu-82, Tyr-133, and Asp-242. Positions 81, 82, 133, 242, and 243 each coordinate glycerol. Thr-264 and Gly-307 together coordinate ADP. ATP-binding residues include Thr-264, Gly-307, Gln-311, and Gly-412. 2 residues coordinate ADP: Gly-412 and Asn-416.

This sequence belongs to the FGGY kinase family.

It catalyses the reaction glycerol + ATP = sn-glycerol 3-phosphate + ADP + H(+). Its pathway is polyol metabolism; glycerol degradation via glycerol kinase pathway; sn-glycerol 3-phosphate from glycerol: step 1/1. Inhibited by fructose 1,6-bisphosphate (FBP). Functionally, key enzyme in the regulation of glycerol uptake and metabolism. Catalyzes the phosphorylation of glycerol to yield sn-glycerol 3-phosphate. The protein is Glycerol kinase of Polaromonas sp. (strain JS666 / ATCC BAA-500).